The following is a 353-amino-acid chain: Photosystem II D2 protein (353 aa).

Position 2 is an N-acetylthreonine (threonine 2). Position 2 is a phosphothreonine (threonine 2). The helical transmembrane segment at 41-61 (CAYFSLGGWLTGTTFVTSWYT) threads the bilayer. Histidine 118 lines the chlorophyll a pocket. Residues 125 to 141 (GFMLRQFELARSVQLRP) form a helical membrane-spanning segment. Glutamine 130 and asparagine 143 together coordinate pheophytin a. A helical membrane pass occupies residues 153-166 (VFVSVFLIYPLGQS). Chlorophyll a is bound at residue histidine 198. A helical membrane pass occupies residues 208 to 228 (AALLCAIHGATVENTLFEDGD). A plastoquinone is bound by residues histidine 215 and phenylalanine 262. Residue histidine 215 participates in Fe cation binding. Histidine 269 contributes to the Fe cation binding site. The chain crosses the membrane as a helical span at residues 279–295 (GLWMSAIGVVGLALNLR).

Belongs to the reaction center PufL/M/PsbA/D family. PSII is composed of 1 copy each of membrane proteins PsbA, PsbB, PsbC, PsbD, PsbE, PsbF, PsbH, PsbI, PsbJ, PsbK, PsbL, PsbM, PsbT, PsbX, PsbY, PsbZ, Psb30/Ycf12, at least 3 peripheral proteins of the oxygen-evolving complex and a large number of cofactors. It forms dimeric complexes. It depends on The D1/D2 heterodimer binds P680, chlorophylls that are the primary electron donor of PSII, and subsequent electron acceptors. It shares a non-heme iron and each subunit binds pheophytin, quinone, additional chlorophylls, carotenoids and lipids. There is also a Cl(-1) ion associated with D1 and D2, which is required for oxygen evolution. The PSII complex binds additional chlorophylls, carotenoids and specific lipids. as a cofactor.

Its subcellular location is the plastid. The protein localises to the chloroplast thylakoid membrane. The catalysed reaction is 2 a plastoquinone + 4 hnu + 2 H2O = 2 a plastoquinol + O2. Its function is as follows. Photosystem II (PSII) is a light-driven water:plastoquinone oxidoreductase that uses light energy to abstract electrons from H(2)O, generating O(2) and a proton gradient subsequently used for ATP formation. It consists of a core antenna complex that captures photons, and an electron transfer chain that converts photonic excitation into a charge separation. The D1/D2 (PsbA/PsbD) reaction center heterodimer binds P680, the primary electron donor of PSII as well as several subsequent electron acceptors. D2 is needed for assembly of a stable PSII complex. This chain is Photosystem II D2 protein, found in Chara vulgaris (Common stonewort).